Reading from the N-terminus, the 403-residue chain is Ribosomal RNA large subunit methyltransferase I (403 aa).

Residues 9 to 88 (YPRLVLSKGR…ESIDIAFFTR (80 aa)) form the PUA domain.

The protein belongs to the methyltransferase superfamily. RlmI family.

Its subcellular location is the cytoplasm. It carries out the reaction cytidine(1962) in 23S rRNA + S-adenosyl-L-methionine = 5-methylcytidine(1962) in 23S rRNA + S-adenosyl-L-homocysteine + H(+). In terms of biological role, specifically methylates the cytosine at position 1962 (m5C1962) of 23S rRNA. In Salmonella newport (strain SL254), this protein is Ribosomal RNA large subunit methyltransferase I.